Consider the following 746-residue polypeptide: Ring assembly protein 3 (746 aa).

It localises to the cytoplasm. Essential for actinomyosin ring assembly during cytokinesis. Has a role, in conjunction with F-actin, in assembling myosin II-containing proteins, such as myo2, at the division site. This Schizosaccharomyces pombe (strain 972 / ATCC 24843) (Fission yeast) protein is Ring assembly protein 3 (rng3).